A 182-amino-acid chain; its full sequence is ATP synthase subunit delta (182 aa).

It belongs to the ATPase delta chain family. F-type ATPases have 2 components, F(1) - the catalytic core - and F(0) - the membrane proton channel. F(1) has five subunits: alpha(3), beta(3), gamma(1), delta(1), epsilon(1). F(0) has three main subunits: a(1), b(2) and c(10-14). The alpha and beta chains form an alternating ring which encloses part of the gamma chain. F(1) is attached to F(0) by a central stalk formed by the gamma and epsilon chains, while a peripheral stalk is formed by the delta and b chains.

Its subcellular location is the cell membrane. Its function is as follows. F(1)F(0) ATP synthase produces ATP from ADP in the presence of a proton or sodium gradient. F-type ATPases consist of two structural domains, F(1) containing the extramembraneous catalytic core and F(0) containing the membrane proton channel, linked together by a central stalk and a peripheral stalk. During catalysis, ATP synthesis in the catalytic domain of F(1) is coupled via a rotary mechanism of the central stalk subunits to proton translocation. This protein is part of the stalk that links CF(0) to CF(1). It either transmits conformational changes from CF(0) to CF(1) or is implicated in proton conduction. This is ATP synthase subunit delta from Alkalihalophilus pseudofirmus (strain ATCC BAA-2126 / JCM 17055 / OF4) (Bacillus pseudofirmus).